Here is a 231-residue protein sequence, read N- to C-terminus: tRNA (guanine-N(7)-)-methyltransferase (231 aa).

Positions 57, 82, 109, and 132 each coordinate S-adenosyl-L-methionine. D132 is an active-site residue. Residues K136, D168, and 205 to 208 (TKFE) contribute to the substrate site. Residues 194-214 (AFVPPPPPRPQTKFERRGLRK) are disordered.

The protein belongs to the class I-like SAM-binding methyltransferase superfamily. TrmB family.

It carries out the reaction guanosine(46) in tRNA + S-adenosyl-L-methionine = N(7)-methylguanosine(46) in tRNA + S-adenosyl-L-homocysteine. It functions in the pathway tRNA modification; N(7)-methylguanine-tRNA biosynthesis. Its function is as follows. Catalyzes the formation of N(7)-methylguanine at position 46 (m7G46) in tRNA. This Halorhodospira halophila (strain DSM 244 / SL1) (Ectothiorhodospira halophila (strain DSM 244 / SL1)) protein is tRNA (guanine-N(7)-)-methyltransferase.